Here is a 109-residue protein sequence, read N- to C-terminus: MLGLLGNTTLVCWITGTALAFLMLLWLMALCLFHRSQEHDVERNRVRQARPRLFHGRRLRLPRLVHHHHHHHVTGVTSVGVHHHHHHSPHRLHHHKHHHRHHHAHGARR.

Residues 13–33 (WITGTALAFLMLLWLMALCLF) traverse the membrane as a helical segment. The tract at residues 77 to 109 (TSVGVHHHHHHSPHRLHHHKHHHRHHHAHGARR) is disordered. Over residues 81–109 (VHHHHHHSPHRLHHHKHHHRHHHAHGARR) the composition is skewed to basic residues.

The protein resides in the membrane. This chain is Histidine-rich carboxyl terminus protein 1 (Hrct1), found in Mus musculus (Mouse).